Reading from the N-terminus, the 243-residue chain is F-box protein pof15 (243 aa).

The F-box domain occupies 28 to 73 (QTSSTLLPVEVIDSVMQYLPAHDVIQSSFASYPLTLIANKIIRARL).

The protein operates within protein modification; protein ubiquitination. Probable substrate recognition component of a SCF (SKP1-CUL1-F-box protein) E3 ubiquitin-protein ligase complex that mediates the ubiquitination and subsequent proteasomal degradation of target proteins. The polypeptide is F-box protein pof15 (pof15) (Schizosaccharomyces pombe (strain 972 / ATCC 24843) (Fission yeast)).